Consider the following 93-residue polypeptide: Small ribosomal subunit protein uS19 (93 aa).

It belongs to the universal ribosomal protein uS19 family.

Functionally, protein S19 forms a complex with S13 that binds strongly to the 16S ribosomal RNA. This Nitratidesulfovibrio vulgaris (strain DSM 19637 / Miyazaki F) (Desulfovibrio vulgaris) protein is Small ribosomal subunit protein uS19.